Here is a 53-residue protein sequence, read N- to C-terminus: Large ribosomal subunit protein eL24 (53 aa).

Residues Cys-4, Cys-7, Cys-30, and Cys-34 each contribute to the Zn(2+) site. The C4-type zinc finger occupies 4–34; that stretch reads CSFCHEEIEPGTGKMYVKRDGTIYFFCSSKC.

This sequence belongs to the eukaryotic ribosomal protein eL24 family. In terms of assembly, part of the 50S ribosomal subunit. Forms a cluster with proteins L3 and L14. Zn(2+) is required as a cofactor.

Functionally, binds to the 23S rRNA. The protein is Large ribosomal subunit protein eL24 of Methanothermobacter thermautotrophicus (strain ATCC 29096 / DSM 1053 / JCM 10044 / NBRC 100330 / Delta H) (Methanobacterium thermoautotrophicum).